A 168-amino-acid chain; its full sequence is Disulfide bond formation protein B 2 (168 aa).

Over 1-9 the chain is Cytoplasmic; it reads MLPARLRTF. Residues 10 to 26 form a helical membrane-spanning segment; that stretch reads FLPACLVALAVLVASFR. The Periplasmic portion of the chain corresponds to 27 to 44; it reads LENTVGLMPCPLCLSQRL. Cys36 and Cys39 are disulfide-bonded. Residues 45 to 61 traverse the membrane as a helical segment; the sequence is LLGGYALLCFAAVLQAP. Residues 62-67 are Cytoplasmic-facing; that stretch reads GTRGIL. The chain crosses the membrane as a helical span at residues 68-85; the sequence is RYARLALGCSLAGALLAA. The Periplasmic segment spans residues 86-140; sequence RHVWLQGAEGVNEVCPVPIGRVFEQSWSEAARQLLLGGPDCRSLAWSFLDLTLPE. Cys100 and Cys126 are disulfide-bonded. Residues 141–159 form a helical membrane-spanning segment; that stretch reads WSLLAFLLLAVLPLSCLLA. Over 160 to 168 the chain is Cytoplasmic; the sequence is YRFRTLART.

This sequence belongs to the DsbB family.

Its subcellular location is the cell inner membrane. Its function is as follows. Required for disulfide bond formation in some periplasmic proteins. Acts by oxidizing the DsbA protein. The protein is Disulfide bond formation protein B 2 (dsbB2) of Pseudomonas putida (strain ATCC 47054 / DSM 6125 / CFBP 8728 / NCIMB 11950 / KT2440).